The chain runs to 293 residues: Indole-3-glycerol phosphate synthase (293 aa).

This sequence belongs to the TrpC family.

The catalysed reaction is 1-(2-carboxyphenylamino)-1-deoxy-D-ribulose 5-phosphate + H(+) = (1S,2R)-1-C-(indol-3-yl)glycerol 3-phosphate + CO2 + H2O. It functions in the pathway amino-acid biosynthesis; L-tryptophan biosynthesis; L-tryptophan from chorismate: step 4/5. This chain is Indole-3-glycerol phosphate synthase, found in Prochlorococcus marinus (strain SARG / CCMP1375 / SS120).